The chain runs to 589 residues: PTS system mannitol-specific EIICB component (589 aa).

Residues 1–25 lie on the Cytoplasmic side of the membrane; sequence MERKSSLKVRVQKLGTSLSNMVMPN. A PTS EIIC type-2 domain is found at 14–347; that stretch reads LGTSLSNMVM…ILKSDNSDDD (334 aa). The helical transmembrane segment at 26–47 threads the bilayer; it reads IGAFIAWGVAASLFIATGYLPN. Residues 48–51 lie on the Extracellular side of the membrane; the sequence is KALD. Residues 52–73 traverse the membrane as a helical segment; the sequence is TNVVGPMLKYVLPLLIGYTGGY. Topologically, residues 74 to 136 are cytoplasmic; that stretch reads NIHKQRGGVI…TGFEMLVNNF (63 aa). A helical transmembrane segment spans residues 137 to 158; sequence SLGLIGFALMVLAFFVIGPVVA. Residues 159–167 lie on the Extracellular side of the membrane; it reads QLTEWVGIG. The chain crosses the membrane as a helical span at residues 168 to 188; it reads VEAIVKVHLLPLANLIIEPAK. Topologically, residues 189 to 275 are cytoplasmic; that stretch reads ILFLNNALNH…VMMKPAMFLA (87 aa). A helical membrane pass occupies residues 276–295; sequence VIAGGLTGTFTFQTLGAGLT. The Extracellular segment spans residues 296–317; that stretch reads APASPGSIIAIMGMSPKGWGPH. Residues 318–339 traverse the membrane as a helical segment; sequence LVVLAGVFAAAVASFLVASIIL. Topologically, residues 340–589 are cytoplasmic; it reads KSDNSDDDSL…YDKLVARMHK (250 aa). The region spanning 383–478 is the PTS EIIB type-2 domain; the sequence is HQIIFACDAG…SLTNGKASGS (96 aa). Cys389 (phosphocysteine intermediate; for EIIB activity) is an active-site residue. Residue Cys389 is modified to Phosphocysteine; by EIIA.

Homodimer.

The protein resides in the cell membrane. The catalysed reaction is D-mannitol(out) + N(pros)-phospho-L-histidyl-[protein] = D-mannitol 1-phosphate(in) + L-histidyl-[protein]. Its function is as follows. The phosphoenolpyruvate-dependent sugar phosphotransferase system (sugar PTS), a major carbohydrate active transport system, catalyzes the phosphorylation of incoming sugar substrates concomitantly with their translocation across the cell membrane. The enzyme II CmtAB PTS system is involved in D-mannitol transport. The chain is PTS system mannitol-specific EIICB component from Streptococcus mutans serotype c (strain ATCC 700610 / UA159).